Consider the following 288-residue polypeptide: Eukaryotic translation initiation factor 3 subunit G (288 aa).

The disordered stretch occupies residues 1 to 33 (MSRVANNRDWADDEDLEDSNELPQSTTTTNKDG). Over residues 11 to 20 (ADDEDLEDSN) the composition is skewed to acidic residues. Positions 21-33 (ELPQSTTTTNKDG) are enriched in polar residues. The RRM domain occupies 208–286 (ATLRVTNVSE…LILRVEFAKK (79 aa)).

It belongs to the eIF-3 subunit G family. As to quaternary structure, component of the eukaryotic translation initiation factor 3 (eIF-3) complex.

It is found in the cytoplasm. In terms of biological role, RNA-binding component of the eukaryotic translation initiation factor 3 (eIF-3) complex, which is involved in protein synthesis of a specialized repertoire of mRNAs and, together with other initiation factors, stimulates binding of mRNA and methionyl-tRNAi to the 40S ribosome. The eIF-3 complex specifically targets and initiates translation of a subset of mRNAs involved in cell proliferation. This subunit can bind 18S rRNA. This chain is Eukaryotic translation initiation factor 3 subunit G (tif35), found in Sclerotinia sclerotiorum (strain ATCC 18683 / 1980 / Ss-1) (White mold).